The sequence spans 115 residues: NAD(P)H-quinone oxidoreductase subunit M (115 aa).

This sequence belongs to the complex I NdhM subunit family. NDH-1 can be composed of about 15 different subunits; different subcomplexes with different compositions have been identified which probably have different functions.

The protein localises to the cellular thylakoid membrane. The enzyme catalyses a plastoquinone + NADH + (n+1) H(+)(in) = a plastoquinol + NAD(+) + n H(+)(out). It carries out the reaction a plastoquinone + NADPH + (n+1) H(+)(in) = a plastoquinol + NADP(+) + n H(+)(out). In terms of biological role, NDH-1 shuttles electrons from an unknown electron donor, via FMN and iron-sulfur (Fe-S) centers, to quinones in the respiratory and/or the photosynthetic chain. The immediate electron acceptor for the enzyme in this species is believed to be plastoquinone. Couples the redox reaction to proton translocation, and thus conserves the redox energy in a proton gradient. Cyanobacterial NDH-1 also plays a role in inorganic carbon-concentration. The sequence is that of NAD(P)H-quinone oxidoreductase subunit M from Prochlorococcus marinus (strain NATL2A).